A 192-amino-acid chain; its full sequence is HTH-type transcriptional repressor SCO4008 (192 aa).

The 61-residue stretch at 7 to 67 folds into the HTH tetR-type domain; the sequence is EATKARIFEA…SVLEKKMLDL (61 aa). The H-T-H motif DNA-binding region spans 30 to 49; the sequence is RIDRIAAEARANKQLIYAYY.

As to quaternary structure, homodimer. Four dimers bind to the two operator sites.

Its activity is regulated as follows. Binding of a wide range of cationic hydrophobic compounds to SCO4008 causes a decrease in DNA-binding, probably via allosteric conformational change of SCO4008. In terms of biological role, probably regulates the expression of its own gene and the adjacent SCO4007 gene by binding to two operator sites in the SCO4007-SCO4008 intergenic region. This is HTH-type transcriptional repressor SCO4008 from Streptomyces coelicolor (strain ATCC BAA-471 / A3(2) / M145).